Reading from the N-terminus, the 198-residue chain is MTLRCLEPSGNGAEGTQSQWGTSGSAEEPSPEAARLAKALRELSHTGWYWGSMTVNEAKEKLKEAPEGTFLIRDSSHSDYLLTISVKTSAGPTNLRIEYQDGKFRLDSIICVKSKLKQFDSVVHLIDYYVQMCKDKRTGPEAPRNGTVHLYLTKPLYTSAPPLQHLCRLTINKCTGTIWGLPLPTRLKDYLEEYKFQV.

Residues 1–31 (MTLRCLEPSGNGAEGTQSQWGTSGSAEEPSP) form a disordered region. An interaction with AREL1 region spans residues 1–75 (MTLRCLEPSG…PEGTFLIRDS (75 aa)). Positions 14-25 (EGTQSQWGTSGS) are enriched in polar residues. 2 positions are modified to phosphoserine: Ser30 and Ser52. The 109-residue stretch at 48–156 (WYWGSMTVNE…TVHLYLTKPL (109 aa)) folds into the SH2 domain. Residues 151–197 (YLTKPLYTSAPPLQHLCRLTINKCTGTIWGLPLPTRLKDYLEEYKFQ) enclose the SOCS box domain. Lys173 is covalently cross-linked (Glycyl lysine isopeptide (Lys-Gly) (interchain with G-Cter in ubiquitin)).

Substrate-recognition component of the ECS(SOCS2) complex, composed of SOCS2, CUL5, ELOB, ELOC and RNF7/RBX2. Interacts with IGF1R. Interacts with DCUN1D1. In terms of processing, ubiquitinated; mediated by AREL1 and leading to its subsequent proteasomal degradation. Ubiquitination is dependent on its phosphorylation at Ser-52, by PKC. Ubiquitination is stimulated by LPS. Post-translationally, phosphorylation at Ser-52 by PKC facilitates its ubiquitination and proteasomal degradation.

The protein resides in the cytoplasm. Its pathway is protein modification; protein ubiquitination. In terms of biological role, substrate-recognition component of a cullin-5-RING E3 ubiquitin-protein ligase complex (ECS complex, also named CRL5 complex), which mediates the ubiquitination and subsequent proteasomal degradation of target proteins, such as EPOR and GHR. Specifically recognizes and binds phosphorylated proteins via its SH2 domain, promoting their ubiquitination. The ECS(SOCS2) complex acts as a key regulator of growth hormone receptor (GHR) levels by mediating ubiquitination and degradation of GHR, following GHR phosphorylation by JAK2. The ECS(SOCS2) also catalyzes ubiquitination and degradation of JAK2-phosphorylated EPOR. The chain is Suppressor of cytokine signaling 2 (SOCS2) from Sus scrofa (Pig).